Reading from the N-terminus, the 232-residue chain is Large ribosomal subunit protein uL1 (232 aa).

This sequence belongs to the universal ribosomal protein uL1 family. In terms of assembly, part of the 50S ribosomal subunit.

Functionally, binds directly to 23S rRNA. The L1 stalk is quite mobile in the ribosome, and is involved in E site tRNA release. Protein L1 is also a translational repressor protein, it controls the translation of the L11 operon by binding to its mRNA. The polypeptide is Large ribosomal subunit protein uL1 (Xanthobacter autotrophicus (strain ATCC BAA-1158 / Py2)).